Reading from the N-terminus, the 128-residue chain is Holo-[acyl-carrier-protein] synthase (128 aa).

2 residues coordinate Mg(2+): Asp-8 and Glu-58.

Belongs to the P-Pant transferase superfamily. AcpS family. Mg(2+) serves as cofactor.

The protein resides in the cytoplasm. It catalyses the reaction apo-[ACP] + CoA = holo-[ACP] + adenosine 3',5'-bisphosphate + H(+). Transfers the 4'-phosphopantetheine moiety from coenzyme A to a Ser of acyl-carrier-protein. In Alkalilimnicola ehrlichii (strain ATCC BAA-1101 / DSM 17681 / MLHE-1), this protein is Holo-[acyl-carrier-protein] synthase.